Here is an 85-residue protein sequence, read N- to C-terminus: Large ribosomal subunit protein bL27 (85 aa).

The disordered stretch occupies residues 1–21; it reads MAHKKAGGSTRNGRDSNAKRL.

The protein belongs to the bacterial ribosomal protein bL27 family.

The polypeptide is Large ribosomal subunit protein bL27 (Erwinia tasmaniensis (strain DSM 17950 / CFBP 7177 / CIP 109463 / NCPPB 4357 / Et1/99)).